A 114-amino-acid polypeptide reads, in one-letter code: uncharacterized protein (114 aa).

The interval 1-114 is disordered; the sequence is MSTAASSRMR…HASQSPDTAY (114 aa). Residues 32–43 are compositionally biased toward low complexity; it reads CRRVPSRPCRPV.

This is an uncharacterized protein from Human adenovirus B serotype 7 (HAdV-7).